Reading from the N-terminus, the 157-residue chain is Transcription elongation factor GreA (157 aa).

Residues 13–75 adopt a coiled-coil conformation; the sequence is RARLEAELEE…EIKSILARAQ (63 aa).

This sequence belongs to the GreA/GreB family.

In terms of biological role, necessary for efficient RNA polymerase transcription elongation past template-encoded arresting sites. The arresting sites in DNA have the property of trapping a certain fraction of elongating RNA polymerases that pass through, resulting in locked ternary complexes. Cleavage of the nascent transcript by cleavage factors such as GreA or GreB allows the resumption of elongation from the new 3'terminus. GreA releases sequences of 2 to 3 nucleotides. This is Transcription elongation factor GreA from Roseiflexus castenholzii (strain DSM 13941 / HLO8).